Here is a 294-residue protein sequence, read N- to C-terminus: Nucleotide-binding protein Tfu_2020 (294 aa).

ATP is bound at residue 18 to 25 (GMSGAGRS). Residue 69–72 (DVRS) participates in GTP binding.

The protein belongs to the RapZ-like family.

Functionally, displays ATPase and GTPase activities. The chain is Nucleotide-binding protein Tfu_2020 from Thermobifida fusca (strain YX).